A 452-amino-acid polypeptide reads, in one-letter code: Chromosomal replication initiator protein DnaA (452 aa).

The interval 1–85 (MSTTAWQKCL…IEVGSKPVEA (85 aa)) is domain I, interacts with DnaA modulators. The interval 85-115 (AVDTPAETIVTSSSTAPLKSAPKKAVDYKSS) is domain II. The tract at residues 116 to 332 (HLNKKFVFDS…GALRRVIANA (217 aa)) is domain III, AAA+ region. ATP-binding residues include G160, G162, K163, and T164. Residues 333-452 (HFTGKPITIE…YKNLMRILSS (120 aa)) form a domain IV, binds dsDNA region.

It belongs to the DnaA family. Oligomerizes as a right-handed, spiral filament on DNA at oriC.

It localises to the cytoplasm. In terms of biological role, plays an essential role in the initiation and regulation of chromosomal replication. ATP-DnaA binds to the origin of replication (oriC) to initiate formation of the DNA replication initiation complex once per cell cycle. Binds the DnaA box (a 9 base pair repeat at the origin) and separates the double-stranded (ds)DNA. Forms a right-handed helical filament on oriC DNA; dsDNA binds to the exterior of the filament while single-stranded (ss)DNA is stabiized in the filament's interior. The ATP-DnaA-oriC complex binds and stabilizes one strand of the AT-rich DNA unwinding element (DUE), permitting loading of DNA polymerase. After initiation quickly degrades to an ADP-DnaA complex that is not apt for DNA replication. Binds acidic phospholipids. In Legionella pneumophila (strain Paris), this protein is Chromosomal replication initiator protein DnaA.